The primary structure comprises 288 residues: Putative movement protein (288 aa).

Positions 207–288 (TGPRATLSQP…TSSRSRRVRG (82 aa)) are disordered.

Transports viral genome to neighboring plant cells directly through plasmosdesmata, without any budding. The movement protein allows efficient cell to cell propagation, by bypassing the host cell wall barrier (Potential). The polypeptide is Putative movement protein (Cucumis melo (Muskmelon)).